Consider the following 548-residue polypeptide: MAKQLVFDESARRSLERGVNAVANAVKVTLGPRGRNVVIEKKFGSPTITKDGVTVAKEVELEDKLENIGAQLLKEVASKTNDITGDGTTTATVLGQAIVKEGLRNVAAGANPLALKRGIDKAVAVAIEEIKKLAVSVEDSEAIKKVAGISANDETVGQEIASAMDKVGKEGVITIEESKGFDTEVDVVEGMQFDKGFINPYFITNPEKMEAVLEDAYILINEKKISNLKDMLPVLEKVAQTGRPLLIIAEDVEGEALATLVVNKLRGTLNIAAVKAPGFGDRRKEMLRDIAAVTGGEVVSEDLGHKLENVGMEMLGRAARIRITKDETTIVDGKGEQAQIDARVNAIKGELDSTDSDYAREKLQERLAKLSGGVAVIRVGAATETELKEKKHRYEDALSTARSAVEEGIVAGGGTTLLRVIPAVRKAAESLTGDEATGARILIRALEEPARQIAANAGEEGSVIVNAVVGSDKARYGFNAATGEYVEDMVAAGIVDPAKVTRTALQNAASIGALILTTEAIVSDKPEKAAPAMPQGGGDMGGMGGMDF.

Residues 29–32 (TLGP), Lys50, 86–90 (DGTTT), Gly413, 479–481 (NAA), and Asp496 each bind ATP.

The protein belongs to the chaperonin (HSP60) family. As to quaternary structure, forms a cylinder of 14 subunits composed of two heptameric rings stacked back-to-back. Interacts with the co-chaperonin GroES.

The protein localises to the cytoplasm. The catalysed reaction is ATP + H2O + a folded polypeptide = ADP + phosphate + an unfolded polypeptide.. Functionally, together with its co-chaperonin GroES, plays an essential role in assisting protein folding. The GroEL-GroES system forms a nano-cage that allows encapsulation of the non-native substrate proteins and provides a physical environment optimized to promote and accelerate protein folding. The sequence is that of Chaperonin GroEL from Deinococcus radiodurans (strain ATCC 13939 / DSM 20539 / JCM 16871 / CCUG 27074 / LMG 4051 / NBRC 15346 / NCIMB 9279 / VKM B-1422 / R1).